Consider the following 271-residue polypeptide: 3-methyl-2-oxobutanoate hydroxymethyltransferase 1 (271 aa).

Positions 53 and 92 each coordinate Mg(2+). Residues 53-54 (DS), aspartate 92, and lysine 120 contribute to the 3-methyl-2-oxobutanoate site. Residue glutamate 122 participates in Mg(2+) binding. Glutamate 189 functions as the Proton acceptor in the catalytic mechanism.

It belongs to the PanB family. Homodecamer; pentamer of dimers. Mg(2+) is required as a cofactor.

It localises to the cytoplasm. The enzyme catalyses 3-methyl-2-oxobutanoate + (6R)-5,10-methylene-5,6,7,8-tetrahydrofolate + H2O = 2-dehydropantoate + (6S)-5,6,7,8-tetrahydrofolate. It participates in cofactor biosynthesis; (R)-pantothenate biosynthesis; (R)-pantoate from 3-methyl-2-oxobutanoate: step 1/2. Functionally, catalyzes the reversible reaction in which hydroxymethyl group from 5,10-methylenetetrahydrofolate is transferred onto alpha-ketoisovalerate to form ketopantoate. The sequence is that of 3-methyl-2-oxobutanoate hydroxymethyltransferase 1 from Burkholderia cenocepacia (strain HI2424).